A 417-amino-acid chain; its full sequence is NADH-quinone oxidoreductase subunit D (417 aa).

Belongs to the complex I 49 kDa subunit family. As to quaternary structure, NDH-1 is composed of 14 different subunits. Subunits NuoB, C, D, E, F, and G constitute the peripheral sector of the complex.

The protein resides in the cell inner membrane. It catalyses the reaction a quinone + NADH + 5 H(+)(in) = a quinol + NAD(+) + 4 H(+)(out). NDH-1 shuttles electrons from NADH, via FMN and iron-sulfur (Fe-S) centers, to quinones in the respiratory chain. The immediate electron acceptor for the enzyme in this species is believed to be ubiquinone. Couples the redox reaction to proton translocation (for every two electrons transferred, four hydrogen ions are translocated across the cytoplasmic membrane), and thus conserves the redox energy in a proton gradient. This is NADH-quinone oxidoreductase subunit D from Aromatoleum aromaticum (strain DSM 19018 / LMG 30748 / EbN1) (Azoarcus sp. (strain EbN1)).